The primary structure comprises 162 residues: uncharacterized protein (162 aa).

A signal peptide spans 1-23 (MLSLKSPAVLLSMVILVPLFALA).

This is an uncharacterized protein from Mycosarcoma maydis (Corn smut fungus).